We begin with the raw amino-acid sequence, 313 residues long: Protein TIC 22-like, chloroplastic (313 aa).

Residues 1–96 (MNSNIFPPSK…RISDDGGGAR (96 aa)) constitute a chloroplast transit peptide.

Belongs to the Tic22 family.

It localises to the plastid. It is found in the chloroplast intermembrane space. Its function is as follows. Involved in protein precursor import into chloroplasts. The protein is Protein TIC 22-like, chloroplastic (TIC22L) of Arabidopsis thaliana (Mouse-ear cress).